The sequence spans 143 residues: Transcriptional regulator MraZ (143 aa).

2 SpoVT-AbrB domains span residues 5–47 (THSP…PIRE) and 76–119 (ASNE…DAQT).

Belongs to the MraZ family. As to quaternary structure, forms oligomers.

The protein localises to the cytoplasm. It is found in the nucleoid. The chain is Transcriptional regulator MraZ from Thermobifida fusca (strain YX).